Consider the following 245-residue polypeptide: Ribonuclease PH (245 aa).

Phosphate is bound by residues arginine 87 and 125-127 (GTR).

It belongs to the RNase PH family. As to quaternary structure, homohexameric ring arranged as a trimer of dimers.

The catalysed reaction is tRNA(n+1) + phosphate = tRNA(n) + a ribonucleoside 5'-diphosphate. In terms of biological role, phosphorolytic 3'-5' exoribonuclease that plays an important role in tRNA 3'-end maturation. Removes nucleotide residues following the 3'-CCA terminus of tRNAs; can also add nucleotides to the ends of RNA molecules by using nucleoside diphosphates as substrates, but this may not be physiologically important. Probably plays a role in initiation of 16S rRNA degradation (leading to ribosome degradation) during starvation. This is Ribonuclease PH from Streptomyces coelicolor (strain ATCC BAA-471 / A3(2) / M145).